An 89-amino-acid polypeptide reads, in one-letter code: Small ribosomal subunit protein uS15 (89 aa).

This sequence belongs to the universal ribosomal protein uS15 family. Part of the 30S ribosomal subunit. Forms a bridge to the 50S subunit in the 70S ribosome, contacting the 23S rRNA.

One of the primary rRNA binding proteins, it binds directly to 16S rRNA where it helps nucleate assembly of the platform of the 30S subunit by binding and bridging several RNA helices of the 16S rRNA. Functionally, forms an intersubunit bridge (bridge B4) with the 23S rRNA of the 50S subunit in the ribosome. This is Small ribosomal subunit protein uS15 from Micrococcus luteus (strain ATCC 4698 / DSM 20030 / JCM 1464 / CCM 169 / CCUG 5858 / IAM 1056 / NBRC 3333 / NCIMB 9278 / NCTC 2665 / VKM Ac-2230) (Micrococcus lysodeikticus).